The following is an 87-amino-acid chain: MSEQTGKVDDSQSPPKVQKKLRKGDLVKVDREKYSNSLESKASDTNLPEYIFQGPGEVLLIKGDYCQVRWRRPVPDVWINSDHIVSY.

Residues 1 to 10 are compositionally biased toward basic and acidic residues; it reads MSEQTGKVDD. The disordered stretch occupies residues 1–23; it reads MSEQTGKVDDSQSPPKVQKKLRK.

Belongs to the complex I NdhO subunit family. NDH-1 can be composed of about 15 different subunits; different subcomplexes with different compositions have been identified which probably have different functions.

The protein resides in the cellular thylakoid membrane. The enzyme catalyses a plastoquinone + NADH + (n+1) H(+)(in) = a plastoquinol + NAD(+) + n H(+)(out). The catalysed reaction is a plastoquinone + NADPH + (n+1) H(+)(in) = a plastoquinol + NADP(+) + n H(+)(out). NDH-1 shuttles electrons from an unknown electron donor, via FMN and iron-sulfur (Fe-S) centers, to quinones in the respiratory and/or the photosynthetic chain. The immediate electron acceptor for the enzyme in this species is believed to be plastoquinone. Couples the redox reaction to proton translocation, and thus conserves the redox energy in a proton gradient. Cyanobacterial NDH-1 also plays a role in inorganic carbon-concentration. In Prochlorococcus marinus (strain NATL2A), this protein is NAD(P)H-quinone oxidoreductase subunit O.